Reading from the N-terminus, the 171-residue chain is Transcription antitermination protein NusB (171 aa).

This sequence belongs to the NusB family.

Involved in transcription antitermination. Required for transcription of ribosomal RNA (rRNA) genes. Binds specifically to the boxA antiterminator sequence of the ribosomal RNA (rrn) operons. The protein is Transcription antitermination protein NusB of Brucella suis (strain ATCC 23445 / NCTC 10510).